The chain runs to 135 residues: Galectin-1 (135 aa).

N-acetylalanine is present on alanine 2. The Galectin domain occupies glycine 4 to glutamate 135. N6-acetyllysine occurs at positions 13 and 29. Serine 30 is modified (phosphoserine). Residues histidine 45–arginine 49, histidine 53, asparagine 62, and tryptophan 69–glutamate 72 contribute to the a beta-D-galactoside site. Residue lysine 108 is modified to N6-acetyllysine; alternate. At lysine 108 the chain carries N6-succinyllysine; alternate. Lysine 128 is subject to N6-acetyllysine.

In terms of assembly, homodimer. Binds LGALS3BP. Interacts with CD2, CD3, CD4, CD6, CD7, CD43, ALCAM and CD45. Interacts with laminin (via poly-N-acetyllactosamine). Interacts with SUSD2. Interacts with cargo receptor TMED10; the interaction mediates the translocation from the cytoplasm into the ERGIC (endoplasmic reticulum-Golgi intermediate compartment) and thereby secretion.

The protein resides in the secreted. The protein localises to the extracellular space. Its subcellular location is the extracellular matrix. It is found in the cytoplasm. Functionally, lectin that binds beta-galactoside and a wide array of complex carbohydrates. Plays a role in regulating apoptosis, cell proliferation and cell differentiation. Inhibits CD45 protein phosphatase activity and therefore the dephosphorylation of Lyn kinase. Strong inducer of T-cell apoptosis. Has hemagglutinating activity towards human erythrocytes. This is Galectin-1 from Capra hircus (Goat).